The chain runs to 317 residues: MFTRILGTGSYLPKNIRSNIVLEKMVDTSHEWIVARTGIQERRISTSDETVAKMGYFAAKRALDMSCVHSDKVGIIIVATTSSSHAFPSSACQIQRDLHIRDTIAFDLSAACSGFVYALGVADQYVKNGSVDYALVVGSDTLSHALNPRDRGTLILFGDGAGAVVLGRSKTPGIISIHLHADGDHGDLLTLPNCNRKSPAISNYLTMSGNKVFKIAVSVLARVIDETLNVNNLHRDELDWLVPHQANLRIISATAKRLDMDMRKVVITLDRHGNTSAASVPLALDEAVRDGRIKSGQLVLLEAFGAGFTWGSALLRF.

Residues Cys-112 and His-244 contribute to the active site. Residues 245-249 (QANLR) form an ACP-binding region. Asn-274 is an active-site residue.

Belongs to the thiolase-like superfamily. FabH family. As to quaternary structure, homodimer.

It is found in the cytoplasm. The catalysed reaction is malonyl-[ACP] + acetyl-CoA + H(+) = 3-oxobutanoyl-[ACP] + CO2 + CoA. It participates in lipid metabolism; fatty acid biosynthesis. Catalyzes the condensation reaction of fatty acid synthesis by the addition to an acyl acceptor of two carbons from malonyl-ACP. Catalyzes the first condensation reaction which initiates fatty acid synthesis and may therefore play a role in governing the total rate of fatty acid production. Possesses both acetoacetyl-ACP synthase and acetyl transacylase activities. Its substrate specificity determines the biosynthesis of branched-chain and/or straight-chain of fatty acids. This is Beta-ketoacyl-[acyl-carrier-protein] synthase III from Blochmanniella pennsylvanica (strain BPEN).